The sequence spans 1198 residues: Tetratricopeptide repeat protein 17 (1198 aa).

Residues 295–328 form a TPR 1 repeat; sequence FTSYYTLGNIYAMLGEYNHSVLCYDHALQAKPGF. The stretch at 340 to 382 forms a coiled coil; sequence CQQKLEQKLEAQHRSLQRTLNELKEYQKQHDHYLRQQEILEKH. TPR repeat units lie at residues 619–652 and 689–722; these read WLIL…APVQ and PLTF…STKC. Disordered regions lie at residues 774-793 and 902-954; these read LDAA…PVLS and VKKP…YQSL. Over residues 902–914 the composition is skewed to basic residues; that stretch reads VKKPKGDHKKPPG. TPR repeat units follow at residues 1071–1105, 1108–1141, and 1142–1175; these read SWVL…APHQ, DVPL…APHF, and AVNH…QPEF.

This sequence belongs to the TTC17 family. As to quaternary structure, interacts with CATIP.

Its subcellular location is the cytoplasm. It localises to the cell membrane. It is found in the cytoskeleton. Plays a role in primary ciliogenesis by modulating actin polymerization. The protein is Tetratricopeptide repeat protein 17 (Ttc17) of Mus musculus (Mouse).